Reading from the N-terminus, the 82-residue chain is MKQIFLLFTLLFITSACSKKLKETLGLSTSGPNEYQVQRVKTLEAPPHYYLIDPRSNKTTYNNIKGKHELNEGEQALMHDMH.

This is an uncharacterized protein from Rickettsia prowazekii (strain Madrid E).